Here is a 266-residue protein sequence, read N- to C-terminus: 3-methyl-2-oxobutanoate hydroxymethyltransferase 2 (266 aa).

Residues Asp45 and Asp84 each contribute to the Mg(2+) site. 3-methyl-2-oxobutanoate-binding positions include 45–46, Asp84, and Lys112; that span reads DS. Glu114 lines the Mg(2+) pocket. Glu181 serves as the catalytic Proton acceptor.

It belongs to the PanB family. As to quaternary structure, homodecamer; pentamer of dimers. It depends on Mg(2+) as a cofactor.

Its subcellular location is the cytoplasm. It catalyses the reaction 3-methyl-2-oxobutanoate + (6R)-5,10-methylene-5,6,7,8-tetrahydrofolate + H2O = 2-dehydropantoate + (6S)-5,6,7,8-tetrahydrofolate. It functions in the pathway cofactor biosynthesis; (R)-pantothenate biosynthesis; (R)-pantoate from 3-methyl-2-oxobutanoate: step 1/2. In terms of biological role, catalyzes the reversible reaction in which hydroxymethyl group from 5,10-methylenetetrahydrofolate is transferred onto alpha-ketoisovalerate to form ketopantoate. The protein is 3-methyl-2-oxobutanoate hydroxymethyltransferase 2 of Pseudomonas entomophila (strain L48).